Consider the following 196-residue polypeptide: Ribonuclease HII (196 aa).

An RNase H type-2 domain is found at 1-196 (MVTIGVDEAG…FAPVAQLQLL (196 aa)). A divalent metal cation-binding residues include Asp-7, Glu-8, and Asp-103.

Belongs to the RNase HII family. Mn(2+) serves as cofactor. It depends on Mg(2+) as a cofactor.

The protein localises to the cytoplasm. The enzyme catalyses Endonucleolytic cleavage to 5'-phosphomonoester.. Functionally, endonuclease that specifically degrades the RNA of RNA-DNA hybrids. The polypeptide is Ribonuclease HII (Novosphingobium aromaticivorans (strain ATCC 700278 / DSM 12444 / CCUG 56034 / CIP 105152 / NBRC 16084 / F199)).